The primary structure comprises 422 residues: UDP-N-acetylmuramoylalanine--D-glutamate ligase (422 aa).

102–108 (GTNGKTT) contributes to the ATP binding site.

The protein belongs to the MurCDEF family.

It localises to the cytoplasm. The enzyme catalyses UDP-N-acetyl-alpha-D-muramoyl-L-alanine + D-glutamate + ATP = UDP-N-acetyl-alpha-D-muramoyl-L-alanyl-D-glutamate + ADP + phosphate + H(+). Its pathway is cell wall biogenesis; peptidoglycan biosynthesis. Its function is as follows. Cell wall formation. Catalyzes the addition of glutamate to the nucleotide precursor UDP-N-acetylmuramoyl-L-alanine (UMA). This chain is UDP-N-acetylmuramoylalanine--D-glutamate ligase, found in Helicobacter pylori (strain HPAG1).